We begin with the raw amino-acid sequence, 1128 residues long: Major DNA-binding protein (1128 aa).

A required for nuclear localization region spans residues 1104-1128 (LGGGGQGSGGRRKRRLATVLPGLEV).

It belongs to the herpesviridae major DNA-binding protein family. As to quaternary structure, homooligomers. Forms double-helical filaments necessary for the formation of replication compartments within the host nucleus. Interacts with the origin-binding protein. Interacts with the helicase primase complex; this interaction stimulates primer synthesis activity of the helicase-primase complex. Interacts with the DNA polymerase. Interacts with the alkaline exonuclease; this interaction increases its nuclease processivity.

It is found in the virion tegument. The protein localises to the host nucleus. Functionally, plays several crucial roles in viral infection. Participates in the opening of the viral DNA origin to initiate replication by interacting with the origin-binding protein. May disrupt loops, hairpins and other secondary structures present on ssDNA to reduce and eliminate pausing of viral DNA polymerase at specific sites during elongation. Promotes viral DNA recombination by performing strand-transfer, characterized by the ability to transfer a DNA strand from a linear duplex to a complementary single-stranded DNA circle. Can also catalyze the renaturation of complementary single strands. Additionally, reorganizes the host cell nucleus, leading to the formation of prereplicative sites and replication compartments. This process is driven by the protein which can form double-helical filaments in the absence of DNA. The polypeptide is Major DNA-binding protein (Homo sapiens (Human)).